The chain runs to 21 residues: Ocellatin-3 (21 aa).

Position 21 is an isoleucine amide (I21).

Expressed by the skin dorsal glands.

It is found in the secreted. Has hemolytic activity against human erythrocytes and antibacterial activity against the Gram-negative bacterium E.coli. This is Ocellatin-3 from Leptodactylus ocellatus (Argus frog).